Here is a 203-residue protein sequence, read N- to C-terminus: DNA-binding transcriptional repressor ScoC (203 aa).

Positions 13 to 157 (ALVFTQKMAQ…MMCMIRHIYG (145 aa)) constitute an HTH marR-type domain. A DNA-binding region (H-T-H motif) is located at residues 63 to 86 (ISEIAKFGVMHVSTAFNFSKKLEE). A disordered region spans residues 183 to 203 (KKKAKDSAADEPAEELEPVNS). Over residues 191–203 (ADEPAEELEPVNS) the composition is skewed to acidic residues.

Homodimer. Interacts with SinR.

Its function is as follows. Negative regulator of protease production and sporulation. Acts by binding directly to the promoter of protease genes (aprE and nprE), and by repressing oligopeptide permease operons (appABCDF and oppABCDF), thereby preventing uptake of oligopeptides required for initiation of sporulation. Acts with SinR as a corepressor of epr expression. Binds to non-m6A-5-methylated 5'-GACGAG-3' sites, tested with scpA; when the target is methylated by DnmA, this repressor no longer binds and transcription is up-regulated. In Bacillus subtilis (strain 168), this protein is DNA-binding transcriptional repressor ScoC.